Here is a 147-residue protein sequence, read N- to C-terminus: Transmembrane protein 210 (147 aa).

An N-terminal signal peptide occupies residues methionine 1 to glycine 31. Over threonine 32–alanine 47 the chain is Extracellular. A helical transmembrane segment spans residues leucine 48–isoleucine 68. The Cytoplasmic portion of the chain corresponds to glycine 69 to glutamine 147. The tract at residues threonine 128–glutamine 147 is disordered. The segment covering leucine 133 to glutamine 147 has biased composition (pro residues).

Its subcellular location is the membrane. The protein resides in the cytoplasmic vesicle. It localises to the secretory vesicle. It is found in the acrosome. The sequence is that of Transmembrane protein 210 (Tmem210) from Mus musculus (Mouse).